A 1263-amino-acid chain; its full sequence is Multidrug resistance protein sirA (1263 aa).

The interval 1–21 is disordered; it reads MAEPESEKPSSAQGGGLPSSD. 4 helical membrane passes run 57–77, 104–124, 179–199, and 206–226; these read LISA…ILFI, IALY…IFTN, KIGL…IGFV, and FILT…SGFM. Positions 57 to 347 constitute an ABC transmembrane type-1 1 domain; the sequence is LISAFFAAVS…VGPHLQAMSL (291 aa). N-linked (GlcNAc...) asparagine glycosylation occurs at N232. Transmembrane regions (helical) follow at residues 284-304 and 318-338; these read VMGW…GLAI and VGAI…FGNV. The ABC transporter 1 domain maps to 380–625; sequence IEFRNVSHVY…EGLYQTFVRR (246 aa). A glycan (N-linked (GlcNAc...) asparagine) is linked at N384. 415–422 contributes to the ATP binding site; sequence GASGSGKS. The N-linked (GlcNAc...) asparagine glycan is linked to N469. A disordered region spans residues 635-672; the sequence is PPHARITPAVDTPASPQHRLSEKTGSIYGQGESEAADK. The next 6 helical transmembrane spans lie at 699–719, 740–760, 817–839, 843–865, 930–950, and 960–980; these read VTGI…SVFF, FWAA…GVQG, VFLG…SLAV, LTLV…LKLV, LSEA…ATLV, and FFIV…VFAF. The ABC transmembrane type-1 2 domain occupies 699-986; the sequence is VTGIASAVIS…VFAFAPDFGK (288 aa). The ABC transporter 2 domain maps to 1021–1259; sequence VDVSNVVFYY…RGSYYDSVNL (239 aa). ATP is bound at residue 1056–1063; sequence GGSGSGKS.

This sequence belongs to the ABC transporter superfamily. ABCB family. Multidrug resistance exporter (TC 3.A.1.201) subfamily.

It localises to the cell membrane. The catalysed reaction is ATP + H2O + xenobioticSide 1 = ADP + phosphate + xenobioticSide 2.. In terms of biological role, sirodesmin transporter that provides the dual role of sirodesmin export and self-protection. Also provides tolerance to gliotoxin. In Leptosphaeria maculans (Blackleg fungus), this protein is Multidrug resistance protein sirA.